Consider the following 102-residue polypeptide: NADH-quinone oxidoreductase subunit K (102 aa).

Helical transmembrane passes span 6 to 26 (LEHGLAVAGILFCLGLVGLMV), 30 to 50 (ILFVLMSLEVMMNASALAFIV), and 62 to 82 (VMFILVISLAAAEASIGLAIL).

Belongs to the complex I subunit 4L family. In terms of assembly, NDH-1 is composed of 13 different subunits. Subunits NuoA, H, J, K, L, M, N constitute the membrane sector of the complex.

It localises to the cell inner membrane. It catalyses the reaction a quinone + NADH + 5 H(+)(in) = a quinol + NAD(+) + 4 H(+)(out). Functionally, NDH-1 shuttles electrons from NADH, via FMN and iron-sulfur (Fe-S) centers, to quinones in the respiratory chain. The immediate electron acceptor for the enzyme in this species is believed to be ubiquinone. Couples the redox reaction to proton translocation (for every two electrons transferred, four hydrogen ions are translocated across the cytoplasmic membrane), and thus conserves the redox energy in a proton gradient. The chain is NADH-quinone oxidoreductase subunit K from Pseudomonas putida (strain W619).